Here is a 589-residue protein sequence, read N- to C-terminus: ATP-dependent lipid A-core flippase (589 aa).

5 consecutive transmembrane segments (helical) span residues 29–49, 70–90, 157–177, 261–281, and 283–303; these read LLLVAALIAALIEAAGTTGFL, WLPVQIILLFVVRGVAGYITD, VIGALALMLWHSWQVTLTILV, MIGAIGLSALLFVAGAQALAG, and LTAGDFVVLMTSMLTIIPGLK. In terms of domain architecture, ABC transmembrane type-1 spans 32 to 314; that stretch reads VAALIAALIE…LTNVQNMVQR (283 aa). An ABC transporter domain is found at 346 to 582; it reads IEFRDVTARY…GGLYSHLHGM (237 aa). 380–387 lines the ATP pocket; it reads GRSGSGKS.

The protein belongs to the ABC transporter superfamily. Lipid exporter (TC 3.A.1.106) family. As to quaternary structure, homodimer.

The protein resides in the cell inner membrane. The catalysed reaction is ATP + H2O + lipid A-core oligosaccharideSide 1 = ADP + phosphate + lipid A-core oligosaccharideSide 2.. Involved in lipopolysaccharide (LPS) biosynthesis. Translocates lipid A-core from the inner to the outer leaflet of the inner membrane. Transmembrane domains (TMD) form a pore in the inner membrane and the ATP-binding domain (NBD) is responsible for energy generation. The protein is ATP-dependent lipid A-core flippase of Xanthomonas axonopodis pv. citri (strain 306).